A 640-amino-acid polypeptide reads, in one-letter code: Chitin elicitor receptor kinase 1 (640 aa).

The N-terminal stretch at 1 to 31 (MKFQMKMKSELCRTYKYWLILLVLWLSGVTQ) is a signal peptide. At 32–248 (RETGVLIVDA…GTVHWRSNVG (217 aa)) the chain is on the extracellular side. 3 disulfide bridges follow: Cys43/Cys104, Cys49/Cys166, and Cys102/Cys164. 3 LysM domains span residues 53-98 (AYYR…NIYL), 113-160 (FSYT…SLTI), and 179-227 (STYV…KAAN). Residues 119-125 (TNDTAEK) and 148-154 (DLSSIYS) each bind chitin. A helical transmembrane segment spans residues 249–269 (IIVGVVVGGIVLAVLLLFALI). The Cytoplasmic portion of the chain corresponds to 270-640 (FGFKHFRRRK…SQPPSGNDQL (371 aa)). A disordered region spans residues 286-308 (MQQSGLLSSSSMAGSKPSRSGST). Residues 289 to 307 (SGLLSSSSMAGSKPSRSGS) are compositionally biased toward low complexity. The Protein kinase domain maps to 330–612 (FSLAKKIGQG…RFAVVQLMTL (283 aa)). Residues 336–344 (IGQGGFASV) and Lys357 each bind ATP. The active-site Proton acceptor is Asp452.

The protein belongs to the protein kinase superfamily. Ser/Thr protein kinase family.

The protein localises to the cell membrane. It carries out the reaction L-seryl-[protein] + ATP = O-phospho-L-seryl-[protein] + ADP + H(+). The catalysed reaction is L-threonyl-[protein] + ATP = O-phospho-L-threonyl-[protein] + ADP + H(+). In terms of biological role, lysin motif (LysM) receptor kinase required as a cell surface receptor for chitin elicitor (chitooligosaccharides) signaling leading to innate immunity in response to biotic stresses. The CERK1, MEKK1a/b, MKK1a/b/c and MPK4a/b proteins are involved in pathogen defense. The pathway induces rapid growth inhibition, cell wall depositions and accumulation of defense-related transcripts. This protein is required for response to chitin. Is able to complement the A.thaliana cerk1 mutant. In Physcomitrium patens (Spreading-leaved earth moss), this protein is Chitin elicitor receptor kinase 1.